A 365-amino-acid chain; its full sequence is Baculoviral IAP repeat-containing protein 7 (365 aa).

2 BIR repeats span residues 7-73 (RQRS…PFLQ) and 115-180 (RLGS…DFLL). Positions 149, 152, 169, and 176 each coordinate Zn(2+). Residues 186 to 234 (AFIRSVQESFFSSPETSPESVGSYEGSPVSSPGSPPVCPFLSTSVAQGA) are self-inhibits the anti-apoptotic function. S198 bears the Phosphoserine mark. Residue S202 is modified to Phosphoserine; by MAPK1. Residue S212 is modified to Phosphoserine. A phosphoserine; by MAPK1 mark is found at S216 and S219. Residues 278 to 306 (TESVSVPRAPTQRERPEPPKEPAPPLSTE) form a disordered region. Positions 288 to 297 (TQRERPEPPK) are enriched in basic and acidic residues. The segment at 318-353 (CKVCMDNDVSMVFVPCGHLVVCTECAPNLRHCPICR) adopts an RING-type zinc-finger fold.

Belongs to the IAP family. Auto-ubiquitinated, and degraded in a 2-step mechanism; a caspase-independent first step and a caspase-dependent second step. Post-translationally, phosphorylated via MAPK-dependent and CDK-dependent pathways during oocyte maturation. Phosphorylation does not appear to affect caspase inhibition or autoubiquitination activity.

The protein resides in the cytoplasm. It carries out the reaction S-ubiquitinyl-[E2 ubiquitin-conjugating enzyme]-L-cysteine + [acceptor protein]-L-lysine = [E2 ubiquitin-conjugating enzyme]-L-cysteine + N(6)-ubiquitinyl-[acceptor protein]-L-lysine.. Its function is as follows. Weak apoptotic suppressor. Has E3 ubiquitin-protein ligase activity. Weak inhibitor of caspase activity. This chain is Baculoviral IAP repeat-containing protein 7 (birc7), found in Xenopus tropicalis (Western clawed frog).